Reading from the N-terminus, the 420-residue chain is UPF0229 protein LPC_3097 (420 aa).

The segment at 83 to 107 is disordered; sequence IAGDRIKRPGGGAGGAGGNASDSGE. Residues 91–100 show a composition bias toward gly residues; sequence PGGGAGGAGG.

Belongs to the UPF0229 family.

In Legionella pneumophila (strain Corby), this protein is UPF0229 protein LPC_3097.